The primary structure comprises 190 residues: Hypoxanthine/guanine phosphoribosyltransferase (190 aa).

Belongs to the purine/pyrimidine phosphoribosyltransferase family. Archaeal HPRT subfamily. In terms of assembly, homodimer.

The protein resides in the cytoplasm. The enzyme catalyses IMP + diphosphate = hypoxanthine + 5-phospho-alpha-D-ribose 1-diphosphate. It carries out the reaction GMP + diphosphate = guanine + 5-phospho-alpha-D-ribose 1-diphosphate. Its pathway is purine metabolism; IMP biosynthesis via salvage pathway; IMP from hypoxanthine: step 1/1. Its function is as follows. Catalyzes a salvage reaction resulting in the formation of IMP that is energically less costly than de novo synthesis. This Methanohalophilus mahii (strain ATCC 35705 / DSM 5219 / SLP) protein is Hypoxanthine/guanine phosphoribosyltransferase.